The chain runs to 169 residues: Cell division inhibitor SulA (169 aa).

A ftsZ binding region spans residues 106-112 (ALRTGNY). A lon protease binding region spans residues 162-169 (KIHSNLYH).

Belongs to the SulA family. As to quaternary structure, interacts with FtsZ. Is rapidly cleaved and degraded by the Lon protease once DNA damage is repaired.

Functionally, component of the SOS system and an inhibitor of cell division. Accumulation of SulA causes rapid cessation of cell division and the appearance of long, non-septate filaments. In the presence of GTP, binds a polymerization-competent form of FtsZ in a 1:1 ratio, thus inhibiting FtsZ polymerization and therefore preventing it from participating in the assembly of the Z ring. This mechanism prevents the premature segregation of damaged DNA to daughter cells during cell division. This Salmonella agona (strain SL483) protein is Cell division inhibitor SulA.